A 311-amino-acid chain; its full sequence is Malate dehydrogenase (311 aa).

Residues 7–13 (GAAGGIG) and aspartate 34 contribute to the NAD(+) site. The substrate site is built by arginine 81 and arginine 87. Residues asparagine 94 and 117–119 (ITN) each bind NAD(+). Substrate is bound by residues asparagine 119 and arginine 153. Catalysis depends on histidine 177, which acts as the Proton acceptor. Methionine 227 contributes to the NAD(+) binding site.

This sequence belongs to the LDH/MDH superfamily. MDH type 1 family. Homodimer.

It catalyses the reaction (S)-malate + NAD(+) = oxaloacetate + NADH + H(+). Catalyzes the reversible oxidation of malate to oxaloacetate. This is Malate dehydrogenase from Shewanella denitrificans (strain OS217 / ATCC BAA-1090 / DSM 15013).